Reading from the N-terminus, the 45-residue chain is Cytochrome b559 subunit beta (45 aa).

The chain crosses the membrane as a helical span at residues 20–36 (WLAVHTLAVPTVFFLGA). His24 contributes to the heme binding site.

Belongs to the PsbE/PsbF family. Heterodimer of an alpha subunit and a beta subunit. PSII is composed of 1 copy each of membrane proteins PsbA, PsbB, PsbC, PsbD, PsbE, PsbF, PsbH, PsbI, PsbJ, PsbK, PsbL, PsbM, PsbT, PsbX, PsbY, PsbZ, Psb30/Ycf12, peripheral proteins PsbO, CyanoQ (PsbQ), PsbU, PsbV and a large number of cofactors. It forms dimeric complexes. The cofactor is heme b.

The protein localises to the cellular thylakoid membrane. This b-type cytochrome is tightly associated with the reaction center of photosystem II (PSII). PSII is a light-driven water:plastoquinone oxidoreductase that uses light energy to abstract electrons from H(2)O, generating O(2) and a proton gradient subsequently used for ATP formation. It consists of a core antenna complex that captures photons, and an electron transfer chain that converts photonic excitation into a charge separation. This Trichormus variabilis (strain ATCC 29413 / PCC 7937) (Anabaena variabilis) protein is Cytochrome b559 subunit beta.